The primary structure comprises 141 residues: Large ribosomal subunit protein uL16 (141 aa).

The protein belongs to the universal ribosomal protein uL16 family. Part of the 50S ribosomal subunit.

Binds 23S rRNA and is also seen to make contacts with the A and possibly P site tRNAs. The polypeptide is Large ribosomal subunit protein uL16 (Campylobacter hominis (strain ATCC BAA-381 / DSM 21671 / CCUG 45161 / LMG 19568 / NCTC 13146 / CH001A)).